The chain runs to 397 residues: DNA-directed RNA polymerase subunit Rpo1C (397 aa).

Belongs to the RNA polymerase beta' chain family. Part of the RNA polymerase complex.

The protein resides in the cytoplasm. The enzyme catalyses RNA(n) + a ribonucleoside 5'-triphosphate = RNA(n+1) + diphosphate. In terms of biological role, DNA-dependent RNA polymerase (RNAP) catalyzes the transcription of DNA into RNA using the four ribonucleoside triphosphates as substrates. Forms part of the jaw domain. The polypeptide is DNA-directed RNA polymerase subunit Rpo1C (Halobacterium salinarum (strain ATCC 29341 / DSM 671 / R1)).